Here is a 340-residue protein sequence, read N- to C-terminus: Probable D,D-dipeptide transport system permease protein DdpB (340 aa).

Residues 1–11 lie on the Periplasmic side of the membrane; the sequence is MTFWSILRQRC. Residues 12–32 traverse the membrane as a helical segment; the sequence is WGLVLVVAGVCVITFIISHLI. The Cytoplasmic portion of the chain corresponds to 33 to 104; the sequence is PGDPARLLAG…IFFPATLELA (72 aa). The 231-residue stretch at 97–327 folds into the ABC transmembrane type-1 domain; sequence FPATLELAFG…LVNLVVDLLY (231 aa). A helical transmembrane segment spans residues 105–125; that stretch reads FGALLLALLIGIPLGILSAVW. Over 126 to 135 the chain is Periplasmic; sequence RNRWLDHLVR. The chain crosses the membrane as a helical span at residues 136-156; the sequence is IMAITGISTPAFWLGLGVIVL. The Cytoplasmic segment spans residues 157–199; the sequence is FYGHLQILPGGGRLDDWLDPPTHVTGFYLLDALLEGNGEVFFN. A helical transmembrane segment spans residues 200-220; sequence ALQHLILPALTLAFVHLGIVA. The Periplasmic portion of the chain corresponds to 221–246; sequence RQIRSAMLEQLSEDYIRTARASGLPG. A helical transmembrane segment spans residues 247–269; the sequence is WYIVLCYALPNALIPSITVLGLA. The Cytoplasmic portion of the chain corresponds to 270-279; that stretch reads LGDLLYGAVL. Residues 280–300 traverse the membrane as a helical segment; that stretch reads TETVFAWPGMGAWVVTSIQAL. Position 301 (aspartate 301) is a topological domain, periplasmic. Residues 302 to 322 traverse the membrane as a helical segment; it reads FPAVMGFAVVVSFAYVLVNLV. The Cytoplasmic portion of the chain corresponds to 323 to 340; the sequence is VDLLYLWIDPRIGRGGGE.

It belongs to the binding-protein-dependent transport system permease family. OppBC subfamily. As to quaternary structure, the complex is composed of two ATP-binding proteins (DdpD and DdpF), two transmembrane proteins (DdpB and DdpC) and a solute-binding protein (DdpA).

The protein localises to the cell inner membrane. Its function is as follows. Part of the ABC transporter complex DdpABCDF, which is probably involved in D,D-dipeptide transport. Probably responsible for the translocation of the substrate across the membrane. The chain is Probable D,D-dipeptide transport system permease protein DdpB (ddpB) from Escherichia coli (strain K12).